The primary structure comprises 150 residues: Large ribosomal subunit protein bL9 (150 aa).

Belongs to the bacterial ribosomal protein bL9 family.

Its function is as follows. Binds to the 23S rRNA. The chain is Large ribosomal subunit protein bL9 from Shewanella denitrificans (strain OS217 / ATCC BAA-1090 / DSM 15013).